Consider the following 241-residue polypeptide: DnaA regulatory inactivator Hda (241 aa).

It belongs to the DnaA family. HdA subfamily. The active form seems to be an ADP-bound monomer. Forms the RIDA complex (regulatory inactivation of DnaA) of ATP-DnaA, ADP-Hda and the DNA-loaded beta sliding clamp (dnaN).

Functionally, mediates the interaction of DNA replication initiator protein DnaA with DNA polymerase subunit beta sliding clamp (dnaN). Stimulates hydrolysis of ATP-DnaA to ADP-DnaA, rendering DnaA inactive for reinitiation, a process called regulatory inhibition of DnaA or RIDA. This Citrobacter koseri (strain ATCC BAA-895 / CDC 4225-83 / SGSC4696) protein is DnaA regulatory inactivator Hda.